The chain runs to 294 residues: 3-methyl-2-oxobutanoate hydroxymethyltransferase (294 aa).

Polar residues predominate over residues 1–12 (MSASAESTNATP). Residues 1–21 (MSASAESTNATPYGTLPPTAA) are disordered. Mg(2+) contacts are provided by aspartate 69 and aspartate 112. 3-methyl-2-oxobutanoate is bound by residues 69–70 (DS), aspartate 112, and lysine 141. Glutamate 143 serves as a coordination point for Mg(2+). The Proton acceptor role is filled by glutamate 210.

This sequence belongs to the PanB family. As to quaternary structure, homodecamer; pentamer of dimers. Mg(2+) serves as cofactor.

The protein resides in the cytoplasm. It carries out the reaction 3-methyl-2-oxobutanoate + (6R)-5,10-methylene-5,6,7,8-tetrahydrofolate + H2O = 2-dehydropantoate + (6S)-5,6,7,8-tetrahydrofolate. The protein operates within cofactor biosynthesis; (R)-pantothenate biosynthesis; (R)-pantoate from 3-methyl-2-oxobutanoate: step 1/2. Its function is as follows. Catalyzes the reversible reaction in which hydroxymethyl group from 5,10-methylenetetrahydrofolate is transferred onto alpha-ketoisovalerate to form ketopantoate. The polypeptide is 3-methyl-2-oxobutanoate hydroxymethyltransferase (Albidiferax ferrireducens (strain ATCC BAA-621 / DSM 15236 / T118) (Rhodoferax ferrireducens)).